The following is a 187-amino-acid chain: Large ribosomal subunit protein uL5 (187 aa).

It belongs to the universal ribosomal protein uL5 family. In terms of assembly, part of the 50S ribosomal subunit; part of the 5S rRNA/L5/L18/L25 subcomplex. Contacts the 5S rRNA and the P site tRNA. Forms a bridge to the 30S subunit in the 70S ribosome.

Its function is as follows. This is one of the proteins that bind and probably mediate the attachment of the 5S RNA into the large ribosomal subunit, where it forms part of the central protuberance. In the 70S ribosome it contacts protein S13 of the 30S subunit (bridge B1b), connecting the 2 subunits; this bridge is implicated in subunit movement. Contacts the P site tRNA; the 5S rRNA and some of its associated proteins might help stabilize positioning of ribosome-bound tRNAs. This chain is Large ribosomal subunit protein uL5, found in Mycobacterium sp. (strain JLS).